A 384-amino-acid chain; its full sequence is Galactokinase (384 aa).

34 to 37 (EHTD) contributes to the substrate binding site. 123-129 (SSGLSSS) is a binding site for ATP. Mg(2+) contacts are provided by Ser-129 and Glu-161. Catalysis depends on Asp-173, which acts as the Proton acceptor. Substrate is bound at residue Tyr-222.

Belongs to the GHMP kinase family. GalK subfamily.

The protein localises to the cytoplasm. It carries out the reaction alpha-D-galactose + ATP = alpha-D-galactose 1-phosphate + ADP + H(+). It functions in the pathway carbohydrate metabolism; galactose metabolism. In terms of biological role, catalyzes the transfer of the gamma-phosphate of ATP to D-galactose to form alpha-D-galactose-1-phosphate (Gal-1-P). This Actinobacillus pleuropneumoniae (Haemophilus pleuropneumoniae) protein is Galactokinase.